The sequence spans 83 residues: Mu-theraphotoxin-Hhn2g (83 aa).

The signal sequence occupies residues 1-21 (MKASMYLALAGLVLLFVVGYA). A propeptide spanning residues 22–48 (SESEEKEFPRELLSKIFAVDDFKGEER) is cleaved from the precursor. Intrachain disulfides connect C50/C65 and C57/C70. L81 is subject to Leucine amide.

It belongs to the neurotoxin 10 (Hwtx-1) family. 15 (Hntx-3) subfamily. As to quaternary structure, monomer. As to expression, expressed by the venom gland.

It is found in the secreted. Its function is as follows. Lethal neurotoxin. Selectively blocks tetrodotoxin-sensitive voltage-gated sodium channels (Nav). Does not affect tetrodotoxin-resistant voltage-gated sodium channels or calcium channels. The chain is Mu-theraphotoxin-Hhn2g from Cyriopagopus hainanus (Chinese bird spider).